A 64-amino-acid chain; its full sequence is DNA-binding protein 7a (64 aa).

The protein belongs to the 7 kDa DNA-binding/endoribonuclease P2 family. In terms of assembly, monomer.

The protein localises to the cytoplasm. In terms of biological role, can constrain negative DNA supercoils. May be involved in maintaining the integrity of the genome at high temperature. The polypeptide is DNA-binding protein 7a (Saccharolobus islandicus (strain L.D.8.5 / Lassen #2) (Sulfolobus islandicus)).